We begin with the raw amino-acid sequence, 359 residues long: Peptide chain release factor 1 (359 aa).

The residue at position 235 (Q235) is an N5-methylglutamine. Residues 287 to 312 (AQEASAMRSAQVGSGDRSERIRTYNF) are disordered.

Belongs to the prokaryotic/mitochondrial release factor family. In terms of processing, methylated by PrmC. Methylation increases the termination efficiency of RF1.

The protein resides in the cytoplasm. Its function is as follows. Peptide chain release factor 1 directs the termination of translation in response to the peptide chain termination codons UAG and UAA. The protein is Peptide chain release factor 1 of Chlamydia trachomatis serovar A (strain ATCC VR-571B / DSM 19440 / HAR-13).